The chain runs to 159 residues: Putative transmembrane protein ORF159 (159 aa).

2 helical membrane passes run leucine 20 to phenylalanine 40 and isoleucine 59 to cysteine 79. The Cell attachment site signature appears at arginine 106–aspartate 108.

Its subcellular location is the host membrane. The protein is Putative transmembrane protein ORF159 of Acidianus sp. F28 (AFV-2).